Consider the following 588-residue polypeptide: Polyphenol oxidase II, chloroplastic (588 aa).

The segment covering 1–10 (MASFTTSPCT) has biased composition (polar residues). Residues 1-32 (MASFTTSPCTSAAPKTPKSLSSSATISSPLPK) form a disordered region. The N-terminal 50 residues, 1–50 (MASFTTSPCTSAAPKTPKSLSSSATISSPLPKPSQIHIATAKRTHHFKVS), are a transit peptide targeting the chloroplast. A compositionally biased stretch (low complexity) spans 16–29 (TPKSLSSSATISSP). The N-terminal 38 residues, 51–88 (CNAPNGDSQPKLDRRDVLLGLGGLAGAASLINNPLAFA), are a transit peptide targeting the thylakoid. Cystine bridges form between cysteine 99/cysteine 116 and cysteine 115/cysteine 179. Cu cation contacts are provided by histidine 178, histidine 199, histidine 208, histidine 330, histidine 334, and histidine 366. The 2'-(S-cysteinyl)-histidine (Cys-His) cross-link spans 182–199 (CNGGYVQTDYPDKEIQVH).

Belongs to the tyrosinase family. As to quaternary structure, monomer. Requires Cu(2+) as cofactor.

It is found in the plastid. The protein resides in the chloroplast thylakoid lumen. The enzyme catalyses 2 catechol + O2 = 2 1,2-benzoquinone + 2 H2O. Its function is as follows. Catalyzes the oxidation of mono- and o-diphenols to o-diquinones. This Ipomoea batatas (Sweet potato) protein is Polyphenol oxidase II, chloroplastic (co-2).